The following is a 96-amino-acid chain: Co-chaperonin GroES (96 aa).

It belongs to the GroES chaperonin family. In terms of assembly, heptamer of 7 subunits arranged in a ring. Interacts with the chaperonin GroEL.

The protein localises to the cytoplasm. Together with the chaperonin GroEL, plays an essential role in assisting protein folding. The GroEL-GroES system forms a nano-cage that allows encapsulation of the non-native substrate proteins and provides a physical environment optimized to promote and accelerate protein folding. GroES binds to the apical surface of the GroEL ring, thereby capping the opening of the GroEL channel. The polypeptide is Co-chaperonin GroES (Ralstonia nicotianae (strain ATCC BAA-1114 / GMI1000) (Ralstonia solanacearum)).